The chain runs to 276 residues: Large ribosomal subunit protein uL2 (276 aa).

2 disordered regions span residues 1–20 (MGIKKYNPTTNGRRNMTTND) and 219–276 (TVRG…RRKK). The span at 7–20 (NPTTNGRRNMTTND) shows a compositional bias: polar residues.

Belongs to the universal ribosomal protein uL2 family. In terms of assembly, part of the 50S ribosomal subunit. Forms a bridge to the 30S subunit in the 70S ribosome.

Its function is as follows. One of the primary rRNA binding proteins. Required for association of the 30S and 50S subunits to form the 70S ribosome, for tRNA binding and peptide bond formation. It has been suggested to have peptidyltransferase activity; this is somewhat controversial. Makes several contacts with the 16S rRNA in the 70S ribosome. In Bacillus cereus (strain G9842), this protein is Large ribosomal subunit protein uL2.